A 306-amino-acid chain; its full sequence is Ornithine carbamoyltransferase (306 aa).

Residues 51–54 (STRT), Gln78, Arg102, and 129–132 (HPCQ) contribute to the carbamoyl phosphate site. L-ornithine-binding positions include Asn160, Asp223, and 227–228 (SM). Residues 263–264 (CL) and Arg291 contribute to the carbamoyl phosphate site.

This sequence belongs to the aspartate/ornithine carbamoyltransferase superfamily. OTCase family.

It localises to the cytoplasm. It carries out the reaction carbamoyl phosphate + L-ornithine = L-citrulline + phosphate + H(+). It functions in the pathway amino-acid biosynthesis; L-arginine biosynthesis; L-arginine from L-ornithine and carbamoyl phosphate: step 1/3. Functionally, reversibly catalyzes the transfer of the carbamoyl group from carbamoyl phosphate (CP) to the N(epsilon) atom of ornithine (ORN) to produce L-citrulline. The polypeptide is Ornithine carbamoyltransferase (Trichormus variabilis (strain ATCC 29413 / PCC 7937) (Anabaena variabilis)).